The sequence spans 426 residues: Tachykinins (426 aa).

Positions 1-116 are excised as a propeptide; the sequence is MQCDFRVHQD…IEDNLSHEFE (116 aa). R127 carries the post-translational modification Arginine amide. A propeptide spanning residues 131–145 is cleaved from the precursor; it reads GYLTPDFEDSYFRDE. An Arginine amide modification is found at R156. Residues 160–167 constitute a propeptide that is removed on maturation; it reads VVSDDDYY. R178 bears the Arginine amide mark. The propeptide occupies 182-235; it reads SLEEVLGEIEKKAAMDYYDTRDKKTYVFEYPEDYEKRLLASIRGKLKEFPMEWE. R246 carries the arginine amide modification. The propeptide occupies 250–259; it reads SLLDEIEELE. Position 270 is an arginine amide (R270). A propeptide spanning residues 274-291 is cleaved from the precursor; it reads NALENYIDYYLDPDMDFD. The interval 299-329 is disordered; it reads QGMRGKKDSDKRAPMGFQGMRGKRNTGQRFD. The residue at position 302 (R302) is an Arginine amide. The propeptide occupies 306–308; it reads DSD. At R319 the chain carries Arginine amide. Residues 323–358 constitute a propeptide that is removed on maturation; sequence NTGQRFDTGINFNIRSSNEYQGTNNRRNALASCQLE. R369 and R386 each carry arginine amide. The propeptide occupies 390–426; sequence WATAPYEDDSPFISVFDNTERIGVDGDSPAILGNSIS.

Belongs to the tachykinin family. As to expression, tachykinins (TK) are expressed throughout the nervous system. APMGFQGMR-amide is also expressed in the retrocerebral complex (at protein level).

Its subcellular location is the secreted. Its function is as follows. Tachykinins are active peptides which excite neurons, evoke behavioral responses, are potent vasodilators and secretagogues, and contract (directly or indirectly) many smooth muscles. The sequence is that of Tachykinins from Camponotus floridanus (Florida carpenter ant).